The following is a 107-amino-acid chain: Large ribosomal subunit protein bL21 (107 aa).

It belongs to the bacterial ribosomal protein bL21 family. In terms of assembly, part of the 50S ribosomal subunit. Contacts protein L20.

Its function is as follows. This protein binds to 23S rRNA in the presence of protein L20. This is Large ribosomal subunit protein bL21 from Pseudothermotoga lettingae (strain ATCC BAA-301 / DSM 14385 / NBRC 107922 / TMO) (Thermotoga lettingae).